The following is a 673-amino-acid chain: DNA ligase (673 aa).

NAD(+) contacts are provided by residues 35-39, 84-85, and glutamate 115; these read DADYD and SL. Lysine 117 (N6-AMP-lysine intermediate) is an active-site residue. NAD(+) is bound by residues arginine 138, glutamate 180, lysine 296, and lysine 320. Residues cysteine 415, cysteine 418, cysteine 433, and cysteine 438 each coordinate Zn(2+). In terms of domain architecture, BRCT spans 595-673; it reads ERGTALAGQT…EDALKKLLGK (79 aa).

The protein belongs to the NAD-dependent DNA ligase family. LigA subfamily. Mg(2+) is required as a cofactor. Requires Mn(2+) as cofactor.

It catalyses the reaction NAD(+) + (deoxyribonucleotide)n-3'-hydroxyl + 5'-phospho-(deoxyribonucleotide)m = (deoxyribonucleotide)n+m + AMP + beta-nicotinamide D-nucleotide.. Its function is as follows. DNA ligase that catalyzes the formation of phosphodiester linkages between 5'-phosphoryl and 3'-hydroxyl groups in double-stranded DNA using NAD as a coenzyme and as the energy source for the reaction. It is essential for DNA replication and repair of damaged DNA. The protein is DNA ligase of Koribacter versatilis (strain Ellin345).